Reading from the N-terminus, the 417-residue chain is NADH-quinone oxidoreductase subunit D (417 aa).

This sequence belongs to the complex I 49 kDa subunit family. As to quaternary structure, NDH-1 is composed of 14 different subunits. Subunits NuoB, C, D, E, F, and G constitute the peripheral sector of the complex.

The protein resides in the cell inner membrane. The enzyme catalyses a quinone + NADH + 5 H(+)(in) = a quinol + NAD(+) + 4 H(+)(out). Functionally, NDH-1 shuttles electrons from NADH, via FMN and iron-sulfur (Fe-S) centers, to quinones in the respiratory chain. The immediate electron acceptor for the enzyme in this species is believed to be ubiquinone. Couples the redox reaction to proton translocation (for every two electrons transferred, four hydrogen ions are translocated across the cytoplasmic membrane), and thus conserves the redox energy in a proton gradient. The protein is NADH-quinone oxidoreductase subunit D of Burkholderia thailandensis (strain ATCC 700388 / DSM 13276 / CCUG 48851 / CIP 106301 / E264).